A 449-amino-acid chain; its full sequence is Putative glycosyltransferase 7 (449 aa).

The Cytoplasmic segment spans residues 1-32; it reads MVSPETSSSHYQSSPMAKYAGTRTRPVVCISD. A helical; Signal-anchor for type II membrane protein membrane pass occupies residues 33–53; that stretch reads VVLFLGGAFMSLILVWSFFSF. The Lumenal segment spans residues 54 to 449; it reads SSISPNLTVK…VPFDYPDEPW (396 aa). N-linked (GlcNAc...) asparagine glycosylation is found at N59, N123, and N332.

The protein belongs to the glycosyltransferase 34 family.

The protein localises to the golgi apparatus membrane. Functionally, probable glycosyltransferase that may be involved in the biosynthesis of xyloglucan. This chain is Putative glycosyltransferase 7 (GT7), found in Arabidopsis thaliana (Mouse-ear cress).